A 342-amino-acid chain; its full sequence is N-acetyl-gamma-glutamyl-phosphate reductase (342 aa).

Residue cysteine 146 is part of the active site.

It belongs to the NAGSA dehydrogenase family. Type 1 subfamily.

The protein localises to the cytoplasm. It catalyses the reaction N-acetyl-L-glutamate 5-semialdehyde + phosphate + NADP(+) = N-acetyl-L-glutamyl 5-phosphate + NADPH + H(+). Its pathway is amino-acid biosynthesis; L-arginine biosynthesis; N(2)-acetyl-L-ornithine from L-glutamate: step 3/4. Its function is as follows. Catalyzes the NADPH-dependent reduction of N-acetyl-5-glutamyl phosphate to yield N-acetyl-L-glutamate 5-semialdehyde. The polypeptide is N-acetyl-gamma-glutamyl-phosphate reductase (Thermobifida fusca (strain YX)).